Here is a 134-residue protein sequence, read N- to C-terminus: MSWQAYVDDHLMCDIEGHEGHRLTAAAIVGHDGSVWAQSATFPQFKPEEMNGIMTDFNEPGHLAPTGLHLGGTKYMVIQGEAGAVIRGKKGSGGITIKKTGQALVFGIYEESVTPGQCNMVVERLGDYLLEQGL.

Cysteine 13 and cysteine 118 are disulfide-bonded. The Involved in PIP2 interaction signature appears at 84 to 100 (AVIRGKKGSGGITIKKT). Threonine 114 is modified (phosphothreonine).

It belongs to the profilin family. Occurs in many kinds of cells as a complex with monomeric actin in a 1:1 ratio. In terms of processing, phosphorylated by MAP kinases.

It localises to the cytoplasm. Its subcellular location is the cytoskeleton. Functionally, binds to actin and affects the structure of the cytoskeleton. At high concentrations, profilin prevents the polymerization of actin, whereas it enhances it at low concentrations. The chain is Profilin-1 from Olea europaea (Common olive).